The chain runs to 396 residues: Ribosomal RNA large subunit methyltransferase I (396 aa).

Residues 2 to 81 (SVRLVLTKGR…ETIDIAFFTR (80 aa)) form the PUA domain.

Belongs to the methyltransferase superfamily. RlmI family.

The protein localises to the cytoplasm. It carries out the reaction cytidine(1962) in 23S rRNA + S-adenosyl-L-methionine = 5-methylcytidine(1962) in 23S rRNA + S-adenosyl-L-homocysteine + H(+). In terms of biological role, specifically methylates the cytosine at position 1962 (m5C1962) of 23S rRNA. The polypeptide is Ribosomal RNA large subunit methyltransferase I (Enterobacter sp. (strain 638)).